The primary structure comprises 498 residues: Phosphatidylserine synthase (498 aa).

Residues 1–65 form a disordered region; the sequence is MKKRTNSRGT…GSVSSAGARR (65 aa). Topologically, residues 1 to 92 are cytoplasmic; sequence MKKRTNSRGT…VDDISLDFFY (92 aa). A compositionally biased stretch (polar residues) spans 7–25; sequence SRGTPTSSGDALLDTSFSS. The helical transmembrane segment at 93-113 threads the bilayer; sequence KPHTITLLAVSVLAVMYFAFV. Over 114–122 the chain is Lumenal; it reads RNEANVDEN. Residues 123–143 traverse the membrane as a helical segment; that stretch reads LWAGLLCIVFFFLIVSVIAFP. Residues 144 to 153 lie on the Cytoplasmic side of the membrane; sequence NGPFTRPHPA. The chain crosses the membrane as a helical span at residues 154 to 174; sequence VWRILFGCSVLYLLTLQFLMF. Residues 175–239 lie on the Lumenal side of the membrane; that stretch reads QNYPTIRSIF…AFKAILIRHM (65 aa). A glycan (N-linked (GlcNAc...) asparagine) is linked at Asn205. A helical membrane pass occupies residues 240–260; it reads GILWAISVMWEITEITFAHLL. The Cytoplasmic segment spans residues 261-266; the sequence is PNFIEC. The helical transmembrane segment at 267 to 287 threads the bilayer; the sequence is WWDALILDVIICNGLGIWMGL. The Lumenal segment spans residues 288-339; that stretch reads KICQILEMREYKWASIKDISTTTGKIKRAMLQFTPESWSAIRWLDPKSTAMR. A helical transmembrane segment spans residues 340 to 360; that stretch reads FAAVIQLVIFWQVTELNTFFL. At 361 to 367 the chain is on the cytoplasmic side; that stretch reads KHIFEMP. Residues 368 to 388 form a helical membrane-spanning segment; it reads PDHFIVIGRLIFIGLFVAPSV. The Lumenal portion of the chain corresponds to 389–402; sequence RQYYVYVTDTRCKR. Residues 403–423 traverse the membrane as a helical segment; it reads VGTQCWVYGAIMVSEAILCIK. Over 424 to 436 the chain is Cytoplasmic; that stretch reads NGKELFERTQAIN. The helical transmembrane segment at 437 to 457 threads the bilayer; the sequence is IVLWLTVQVIISVAFVYLAVY. Over 458–498 the chain is Lumenal; that stretch reads WQQRQLKKVSSTPAKTKETIPASSSSPSKGKLSPQKEKKLK. A disordered region spans residues 465-498; that stretch reads KVSSTPAKTKETIPASSSSPSKGKLSPQKEKKLK. Low complexity predominate over residues 478-490; it reads PASSSSPSKGKLS.

Belongs to the phosphatidyl serine synthase family.

It is found in the endoplasmic reticulum membrane. The catalysed reaction is a 1,2-diacyl-sn-glycero-3-phosphoethanolamine + L-serine = a 1,2-diacyl-sn-glycero-3-phospho-L-serine + ethanolamine. It functions in the pathway phospholipid metabolism; phosphatidylserine biosynthesis. In terms of biological role, catalyzes a base-exchange reaction in which the polar head group of phosphatidylethanolamine (PE) is replaced by L-serine. The chain is Phosphatidylserine synthase from Drosophila melanogaster (Fruit fly).